The sequence spans 246 residues: DNA polymerase sliding clamp (246 aa).

This sequence belongs to the PCNA family. Homotrimer. The subunits circularize to form a toroid; DNA passes through its center. Replication factor C (RFC) is required to load the toroid on the DNA.

Sliding clamp subunit that acts as a moving platform for DNA processing. Responsible for tethering the catalytic subunit of DNA polymerase and other proteins to DNA during high-speed replication. This is DNA polymerase sliding clamp from Methanocella arvoryzae (strain DSM 22066 / NBRC 105507 / MRE50).